The primary structure comprises 110 residues: uncharacterized protein (110 aa).

3 helical membrane passes run 4-26 (LVGG…KSIN), 46-68 (ANRY…GLLL), and 72-91 (LFIL…FMLT).

It is found in the cell membrane. This is an uncharacterized protein from Bacillus subtilis (strain 168).